The chain runs to 91 residues: Acylphosphatase (91 aa).

In terms of domain architecture, Acylphosphatase-like spans 6-91 (CMRCYISGRV…WEDYITFDVL (86 aa)). Residues R21 and N39 contribute to the active site.

Belongs to the acylphosphatase family.

It carries out the reaction an acyl phosphate + H2O = a carboxylate + phosphate + H(+). The protein is Acylphosphatase (acyP) of Legionella pneumophila (strain Lens).